We begin with the raw amino-acid sequence, 605 residues long: Protein DENND6A (605 aa).

The tract at residues 1-20 is disordered; it reads MALPGPAVFGPGSRGSLDEA. One can recognise a uDENN domain in the interval 60-239; sequence HCVCVVGFDL…KVRIPTCHDK (180 aa). Residue Ser-124 is modified to Phosphoserine. The 126-residue stretch at 265 to 390 folds into the cDENN domain; it reads EVDLFRCFCP…VKVKKLKNLK (126 aa). In terms of domain architecture, dDENN spans 392–525; the sequence is LDSKPGVYTS…KTRRKEMTQK (134 aa). An N6-methyllysine modification is found at Lys-507.

Belongs to the DENND6 family.

Its subcellular location is the recycling endosome. The protein resides in the cytoplasm. In terms of biological role, guanine nucleotide exchange factor (GEF) for RAB14. Component of an endocytic recycling pathway that is required for the control of ADAM10 transport, shedding of N-cadherin/CDH2 by ADAM9 or ADAM10 and regulation of cell-cell junctions. Required for RAB14 recruitment to recycling endosomes. This is Protein DENND6A (Dennd6a) from Mus musculus (Mouse).